A 282-amino-acid polypeptide reads, in one-letter code: DNA-directed RNA polymerase III subunit RPC5 (282 aa).

The tract at residues 1-70 (MSIDNKLFVT…TGEEEEDDPV (70 aa)) is disordered. 2 stretches are compositionally biased toward acidic residues: residues 10 to 35 (TEED…DMIA) and 60 to 70 (DTGEEEEDDPV). A Phosphothreonine modification is found at T61.

In terms of assembly, component of the RNA polymerase III (Pol III) complex consisting of 17 subunits. Interacts with RPC53/RPC4. RPC53/RPC4, RPC37/RPC5 and RPC11/RPC10 probably form a Pol III subcomplex.

The protein localises to the nucleus. Functionally, DNA-dependent RNA polymerase catalyzes the transcription of DNA into RNA using the four ribonucleoside triphosphates as substrates. Specific peripheric component of RNA polymerase III which synthesizes small RNAs, such as 5S rRNA and tRNAs. The RPC53/RPC4-RPC37/RPC5 subcomplex is required for terminator recognition and reinitiation. The protein is DNA-directed RNA polymerase III subunit RPC5 (RPC37) of Saccharomyces cerevisiae (strain ATCC 204508 / S288c) (Baker's yeast).